Consider the following 483-residue polypeptide: Aspartyl/glutamyl-tRNA(Asn/Gln) amidotransferase subunit B (483 aa).

This sequence belongs to the GatB/GatE family. GatB subfamily. As to quaternary structure, heterotrimer of A, B and C subunits.

The catalysed reaction is L-glutamyl-tRNA(Gln) + L-glutamine + ATP + H2O = L-glutaminyl-tRNA(Gln) + L-glutamate + ADP + phosphate + H(+). It catalyses the reaction L-aspartyl-tRNA(Asn) + L-glutamine + ATP + H2O = L-asparaginyl-tRNA(Asn) + L-glutamate + ADP + phosphate + 2 H(+). In terms of biological role, allows the formation of correctly charged Asn-tRNA(Asn) or Gln-tRNA(Gln) through the transamidation of misacylated Asp-tRNA(Asn) or Glu-tRNA(Gln) in organisms which lack either or both of asparaginyl-tRNA or glutaminyl-tRNA synthetases. The reaction takes place in the presence of glutamine and ATP through an activated phospho-Asp-tRNA(Asn) or phospho-Glu-tRNA(Gln). The protein is Aspartyl/glutamyl-tRNA(Asn/Gln) amidotransferase subunit B of Herpetosiphon aurantiacus (strain ATCC 23779 / DSM 785 / 114-95).